A 261-amino-acid polypeptide reads, in one-letter code: DNA repair protein RecO (261 aa).

The protein belongs to the RecO family.

Functionally, involved in DNA repair and RecF pathway recombination. This Chlorobium phaeobacteroides (strain BS1) protein is DNA repair protein RecO.